A 137-amino-acid chain; its full sequence is Nucleoside diphosphate kinase (137 aa).

The ATP site is built by K9, F57, R85, T91, R102, and N112. The active-site Pros-phosphohistidine intermediate is the H115.

This sequence belongs to the NDK family. As to quaternary structure, homotetramer. Mg(2+) is required as a cofactor.

The protein localises to the cytoplasm. The enzyme catalyses a 2'-deoxyribonucleoside 5'-diphosphate + ATP = a 2'-deoxyribonucleoside 5'-triphosphate + ADP. The catalysed reaction is a ribonucleoside 5'-diphosphate + ATP = a ribonucleoside 5'-triphosphate + ADP. Its function is as follows. Major role in the synthesis of nucleoside triphosphates other than ATP. The ATP gamma phosphate is transferred to the NDP beta phosphate via a ping-pong mechanism, using a phosphorylated active-site intermediate. This Leptospira biflexa serovar Patoc (strain Patoc 1 / ATCC 23582 / Paris) protein is Nucleoside diphosphate kinase.